The primary structure comprises 823 residues: Apoptosis-resistant E3 ubiquitin protein ligase 1 (823 aa).

One copy of the Filamin repeat lies at 52-158 (GNYLDPRSCK…VAYSPYYKIF (107 aa)). The segment at 315-345 (PPMHMTSSQRRPSTAVDEEDEDSPSECHTPE) is disordered. Residues 483 to 789 (SISDWSKNFE…THSTLPTAHT (307 aa)) form an interaction with SOCS2 region. The 341-residue stretch at 483–823 (SISDWSKNFE…SEGCEGFGML (341 aa)) folds into the HECT domain. Cys790 acts as the Glycyl thioester intermediate in catalysis.

Interacts with SOCS2. Interacts (via HECT domain) with HTRA2, DIABLO/SMAC and SEPTIN4; in the cytoplasm following induction of apoptosis. In terms of processing, autoubiquitinated in vitro in the presence of E2 enzyme UBE2D1/UBCH5A.

It carries out the reaction S-ubiquitinyl-[E2 ubiquitin-conjugating enzyme]-L-cysteine + [acceptor protein]-L-lysine = [E2 ubiquitin-conjugating enzyme]-L-cysteine + N(6)-ubiquitinyl-[acceptor protein]-L-lysine.. It participates in protein modification; protein ubiquitination. Functionally, E3 ubiquitin-protein ligase that catalyzes 'Lys-11'- or 'Lys-33'-linked polyubiquitin chains, with some preference for 'Lys-33' linkages. E3 ubiquitin-protein ligases accept ubiquitin from an E2 ubiquitin-conjugating enzyme in the form of a thioester and then directly transfers the ubiquitin to targeted substrates. Ubiquitinates SEPTIN4, DIABLO/SMAC and HTRA2 in vitro. Modulates pulmonary inflammation by targeting SOCS2 for ubiquitination and subsequent degradation by the proteasome. The chain is Apoptosis-resistant E3 ubiquitin protein ligase 1 from Homo sapiens (Human).